The sequence spans 329 residues: Ribosomal RNA small subunit methyltransferase H (329 aa).

S-adenosyl-L-methionine is bound by residues 39 to 41, Asp56, Phe85, Asp106, and Gln113; that span reads GGY. The tract at residues 289–308 is disordered; sequence SGAIRPTPEEEARNPRARSA.

It belongs to the methyltransferase superfamily. RsmH family.

It localises to the cytoplasm. The catalysed reaction is cytidine(1402) in 16S rRNA + S-adenosyl-L-methionine = N(4)-methylcytidine(1402) in 16S rRNA + S-adenosyl-L-homocysteine + H(+). Specifically methylates the N4 position of cytidine in position 1402 (C1402) of 16S rRNA. This Novosphingobium aromaticivorans (strain ATCC 700278 / DSM 12444 / CCUG 56034 / CIP 105152 / NBRC 16084 / F199) protein is Ribosomal RNA small subunit methyltransferase H.